The chain runs to 740 residues: Phosphoribosylformylglycinamidine synthase subunit PurL (740 aa).

The active site involves His-54. Positions 57 and 96 each coordinate ATP. A Mg(2+)-binding site is contributed by Glu-98. Residues 99-102 (SHNH) and Arg-121 each bind substrate. The Proton acceptor role is filled by His-100. Asp-122 is a binding site for Mg(2+). Residue Gln-245 coordinates substrate. Position 273 (Asp-273) interacts with Mg(2+). Residue 317 to 319 (ESQ) participates in substrate binding. Asp-499 and Gly-536 together coordinate ATP. Asn-537 is a Mg(2+) binding site. Ser-539 lines the substrate pocket.

Belongs to the FGAMS family. As to quaternary structure, monomer. Part of the FGAM synthase complex composed of 1 PurL, 1 PurQ and 2 PurS subunits.

It is found in the cytoplasm. It catalyses the reaction N(2)-formyl-N(1)-(5-phospho-beta-D-ribosyl)glycinamide + L-glutamine + ATP + H2O = 2-formamido-N(1)-(5-O-phospho-beta-D-ribosyl)acetamidine + L-glutamate + ADP + phosphate + H(+). The protein operates within purine metabolism; IMP biosynthesis via de novo pathway; 5-amino-1-(5-phospho-D-ribosyl)imidazole from N(2)-formyl-N(1)-(5-phospho-D-ribosyl)glycinamide: step 1/2. Its function is as follows. Part of the phosphoribosylformylglycinamidine synthase complex involved in the purines biosynthetic pathway. Catalyzes the ATP-dependent conversion of formylglycinamide ribonucleotide (FGAR) and glutamine to yield formylglycinamidine ribonucleotide (FGAM) and glutamate. The FGAM synthase complex is composed of three subunits. PurQ produces an ammonia molecule by converting glutamine to glutamate. PurL transfers the ammonia molecule to FGAR to form FGAM in an ATP-dependent manner. PurS interacts with PurQ and PurL and is thought to assist in the transfer of the ammonia molecule from PurQ to PurL. This Anoxybacillus flavithermus (strain DSM 21510 / WK1) protein is Phosphoribosylformylglycinamidine synthase subunit PurL.